Here is a 188-residue protein sequence, read N- to C-terminus: MLVIAGLGNPGKNYENTRHNVGFMVIDQLAKEWNIELNQNKFNGLYGTGFVSGKKVLLVKPLTYMNLSGECLRPLMDYYDVDNEDLTVIYDDLDLPTGKIRLRTKGSAGGHNGIKSLIQHLGTSEFDRIRIGIGRPVNGMKVVDYVLGSFTKEEAPEIEEAVDKSVKACEASLSKPFLEVMNEFNAKV.

A tRNA-binding site is contributed by Y14. The Proton acceptor role is filled by H19. TRNA contacts are provided by Y64, N66, and N112.

It belongs to the PTH family. As to quaternary structure, monomer.

It is found in the cytoplasm. It carries out the reaction an N-acyl-L-alpha-aminoacyl-tRNA + H2O = an N-acyl-L-amino acid + a tRNA + H(+). Its function is as follows. Hydrolyzes ribosome-free peptidyl-tRNAs (with 1 or more amino acids incorporated), which drop off the ribosome during protein synthesis, or as a result of ribosome stalling. Functionally, catalyzes the release of premature peptidyl moieties from peptidyl-tRNA molecules trapped in stalled 50S ribosomal subunits, and thus maintains levels of free tRNAs and 50S ribosomes. Releases Ala-tailed nascent peptides from stalled 50S ribosomal subunits. Non-templated Ala tailing occurs as part of the ribosome quality control (RQC) pathway. In the absence of Ala tails significantly less peptide release occurs. The Ala tail facilitates the interaction of Pth with the nascent peptide-tRNA ester bond as well as promoting nascent chain degradation; 3 Ala residues suffice to stimulate peptide release from stalled 50S ribosomal subunits. Complements a temperature-sensitive pth mutation in E.coli. The protein is Peptidyl-tRNA hydrolase of Bacillus subtilis (strain 168).